Here is a 242-residue protein sequence, read N- to C-terminus: Zinc finger protein ZOP1 (242 aa).

The Matrin-type zinc finger occupies 11–42 (KWCEFCKIWIQNNPTSIRNHDLGKRHRECVDK). Residues 42–71 (KKLTDMRERSAAKDKELKKNEKLLQQIEAK) are a coiled coil. The disordered stretch occupies residues 154-242 (VKKPVSSSGA…PLLGLYNRPF (89 aa)). Residues 155–172 (KKPVSSSGAGPSVGKPPG) show a composition bias toward low complexity. Over residues 201 to 233 (RQDEKPKKVSAEEKAALKAREAARKRVEDREKP) the composition is skewed to basic and acidic residues.

Component of a pre-mRNA splicing complex. Interacts with STA1. Interacts with PRP31.

It is found in the nucleus. The protein localises to the cajal body. Functionally, nucleic acid-binding protein that promotes Pol IV-dependent small interfering RNA (siRNA) accumulation, DNA methylation and transcriptional silencing. May possess both RNA-directed DNA methylation (RdDM)-dependent and -independent roles in transcriptional silencing. Acts as a pre-mRNA splicing factor that associates with several typical components of the splicing machinery as well as with Pol II. The polypeptide is Zinc finger protein ZOP1 (Arabidopsis thaliana (Mouse-ear cress)).